We begin with the raw amino-acid sequence, 316 residues long: Small kinetochore-associated protein (316 aa).

Position 128 is a phosphoserine (Ser128). The tract at residues 159 to 316 (VRKGYKPLSK…LKEMEQLLEM (158 aa)) is interaction with SPAG5. Coiled coils occupy residues 166-216 (LSKQ…FRDN) and 248-316 (SMLL…LLEM).

As to quaternary structure, part of an astrin (SPAG5)-kinastrin (SKAP) complex containing KNSTRN, SPAG5, PLK1, DYNLL1 and SGO2. Interacts with SPAG5. Directly binds to microtubules, although at relatively low affinity. Interacts with CENPE; this interaction greatly favors microtubule-binding. Interacts with DSN1/MIS13; leading to localization to kinetochores. Interacts with MAPRE1/EB1; leading to localization to the microtubule plus ends. Interacts with PRPF19. Interacts with DYNLL1. Interacts with MAP4. As to expression, widely expressed, including in skin.

The protein localises to the nucleus. It localises to the chromosome. Its subcellular location is the centromere. It is found in the kinetochore. The protein resides in the cytoplasm. The protein localises to the cytoskeleton. It localises to the spindle pole. Its subcellular location is the microtubule organizing center. In terms of biological role, essential component of the mitotic spindle required for faithful chromosome segregation and progression into anaphase. Promotes the metaphase-to-anaphase transition and is required for chromosome alignment, normal timing of sister chromatid segregation, and maintenance of spindle pole architecture. The astrin (SPAG5)-kinastrin (SKAP) complex promotes stable microtubule-kinetochore attachments. Required for kinetochore oscillations and dynamics of microtubule plus-ends during live cell mitosis, possibly by forming a link between spindle microtubule plus-ends and mitotic chromosomes to achieve faithful cell division. May be involved in UV-induced apoptosis via its interaction with PRPF19; however, these results need additional evidences. The protein is Small kinetochore-associated protein of Homo sapiens (Human).